The primary structure comprises 714 residues: Phenylalanine 2-monooxygenase precursor (714 aa).

Positions 1-15 (MGVTVIPRLLGLKDE) are cleaved as a propeptide — removed in mature form; occupies the channel of the substrate amino acid from the outside of the protein to the interior flavin ring in the precursor. FAD is bound by residues Gly2, Gly68, and 95-96 (EA). A propeptide spans 108-109 (IK) (linker peptide). Residues Arg120, 141-144 (GAMR), and Val375 contribute to the FAD site. Arg144 contacts substrate. Residue Tyr537 participates in substrate binding. FAD is bound by residues 652-653 (SD) and 660-662 (GWL). Gly660 contributes to the substrate binding site.

It belongs to the phenylalanine 2-monooxygenase family. As to quaternary structure, heterotetramer composed of 2 alpha and 2 beta subunits. It depends on FAD as a cofactor. Proteolytically cleaved to yield the active enzyme. Cleavage of the linkage between the 2 subunits causes reshaping of the oxygen channel and the hydrophobic environment around the flavin ring. Removal of the prosequence causes opening of the amino acid channel.

The catalysed reaction is L-phenylalanine + O2 = 2-phenylacetamide + CO2 + H2O. Its function is as follows. Catalyzes both oxygenative decarboxylation and oxidative deamination, depending on the substrate used. Has high activity for L-Phe and L-Tyr, but relatively low activities for L-Met and L-Trp. L-Phe is mainly oxygenated and L-Met is mainly oxidized. The sequence is that of Phenylalanine 2-monooxygenase precursor from Pseudomonas sp.